The sequence spans 114 residues: Superoxide dismutase [Cu-Zn] (114 aa).

Positions 37, 39, and 54 each coordinate Cu cation. Positions 48–68 (CMSSGPHFNPRNKEHGAPTDE) are disordered. His-54, His-62, His-71, and Asp-74 together coordinate Zn(2+). Basic and acidic residues predominate over residues 58-68 (RNKEHGAPTDE). His-111 provides a ligand contact to Cu cation.

This sequence belongs to the Cu-Zn superoxide dismutase family. Homodimer. Cu cation is required as a cofactor. It depends on Zn(2+) as a cofactor.

It localises to the cytoplasm. The enzyme catalyses 2 superoxide + 2 H(+) = H2O2 + O2. Destroys radicals which are normally produced within the cells and which are toxic to biological systems. This chain is Superoxide dismutase [Cu-Zn], found in Drosophila miranda (Fruit fly).